Here is a 530-residue protein sequence, read N- to C-terminus: S-adenosylhomocysteine hydrolase-like protein 1 (530 aa).

M1 carries the post-translational modification N-acetylmethionine. At S2 the chain carries N-acetylserine. S2 is modified (phosphoserine). At K40 the chain carries N6-acetyllysine. The disordered stretch occupies residues 53 to 103; sequence KFPTKTGRRSLSRSISQSSTDSYSSAASYTDSSDDEVSPREKQQTNSKGSS. A compositionally biased stretch (low complexity) spans 64 to 83; it reads SRSISQSSTDSYSSAASYTD. The interval 65–92 is PEST; that stretch reads RSISQSSTDSYSSAASYTDSSDDEVSPR. A phosphoserine mark is found at S68, S71, S74, S77, and S84. The interaction with BCL2L10 stretch occupies residues 138–201; that stretch reads QGEKPLAGAK…EAGVAVFAWK (64 aa). Residues T155, D229, E254, K284, and D288 each contribute to the substrate site. The tract at residues 281 to 448 is NAD binding; it reads SVTKQKFDNL…EGRLLNLSCS (168 aa). NAD(+) contacts are provided by residues 318–322, E341, and N376; that span reads GYGEV. S391 carries the phosphoserine modification. NAD(+) is bound at residue 397–399; sequence MGH. The PDZ-binding stretch occupies residues 520-530; it reads NGPFKPNYYRY.

This sequence belongs to the adenosylhomocysteinase family. As to quaternary structure, forms multimers. Forms heteromultimers with AHCYL2 (via the C-terminal region). Interacts (when phosphorylated) with ITPR1 (when not phosphorylated); the interaction suppresses inositol 1,4,5-trisphosphate binding to ITPR1. Interacts with BCL2L10; this strengthens the interaction of AHCYL1 with ITPR1. Interacts with CFTR and SLC26A6; the interactions take place once AHCYL1 is released from ITPR1 and increase CFTR and SLC26A6 activities. Interacts with RRM1; in a phosphorylation- and (dATP)-dependent manner. Interacts (via PEST domain when phosphorylated) with SLC4A4 isoform 1 but not isoform 2; the interaction increases SLC4A4 isoform 1 activity. Interacts (when phosphorylated) with SLC9A3; the interaction is required for SLC9A3 apical location and activity. Interacts (when phosphorylated) with FIP1L1; the interaction is direct and associates AHCYL1 with the CPSF complex and RNA. Interacts with PAPOLA. Interacts with ZCCHC4. Interacts with AHCY. NAD(+) serves as cofactor. Post-translationally, phosphorylated at Ser/Thr residues between Ser-68 and Thr-72 in the PEST region: required for interaction with dATP-bound RRM1 and ITPR1. Phosphorylation at Ser-68 by PRKD1 and CAMK4 is required for further phosphorylations by CSNK1A1. Phosphorylation is induced by oxidative stress. Probably phosphorylated by CAMK2A; phosphorylation at Ser-68 may be required for interaction with SLC9A3. Dephosphorylated in response to apoptotic stress conditions which causes translocation of both AHCYL1 and BCL2L10 from mitochondria-associated endoplasmic reticulum membranes and promotes apoptosis. As to expression, expressed in dendritic cells.

The protein localises to the endoplasmic reticulum. The protein resides in the cytoplasm. It is found in the cytosol. Its subcellular location is the apical cell membrane. It localises to the microsome. In terms of biological role, multifaceted cellular regulator which coordinates several essential cellular functions including regulation of epithelial HCO3(-) and fluid secretion, mRNA processing and DNA replication. Regulates ITPR1 sensitivity to inositol 1,4,5-trisphosphate, competing for the common binding site and acting as endogenous 'pseudoligand' whose inhibitory activity can be modulated by its phosphorylation status. Promotes the formation of contact points between the endoplasmic reticulum (ER) and mitochondria, facilitating transfer of Ca(2+) from the ER to mitochondria. Under normal cellular conditions, functions cooperatively with BCL2L10 to limit ITPR1-mediated Ca(2+) release but, under apoptotic stress conditions, dephosphorylated which promotes dissociation of both AHCYL1 and BCL2L10 from mitochondria-associated endoplasmic reticulum membranes, inhibits BCL2L10 interaction with ITPR1 and leads to increased Ca(2+) transfer to mitochondria which promotes apoptosis. In the pancreatic and salivary ducts, at resting state, attenuates inositol 1,4,5-trisphosphate-induced calcium release by interacting with ITPR1. When extracellular stimuli induce ITPR1 phosphorylation or inositol 1,4,5-trisphosphate production, dissociates from ITPR1 to interact with CFTR and SLC26A6, mediating their synergistic activation by calcium and cAMP that stimulates the epithelial secretion of electrolytes and fluid. Also activates basolateral SLC4A4 isoform 1 to coordinate fluid and HCO3(-) secretion. Inhibits the effect of STK39 on SLC4A4 and CFTR by recruiting PP1 phosphatase which activates SLC4A4, SLC26A6 and CFTR through dephosphorylation. Mediates the induction of SLC9A3 surface expression produced by Angiotensin-2. Depending on the cell type, activates SLC9A3 in response to calcium or reverses SLC9A3R2-dependent calcium inhibition. May modulate the polyadenylation state of specific mRNAs, both by controlling the subcellular location of FIP1L1 and by inhibiting PAPOLA activity, in response to a stimulus that alters its phosphorylation state. Acts as a (dATP)-dependent inhibitor of ribonucleotide reductase large subunit RRM1, controlling the endogenous dNTP pool and ensuring normal cell cycle progression. In vitro does not exhibit any S-adenosyl-L-homocysteine hydrolase activity. This Homo sapiens (Human) protein is S-adenosylhomocysteine hydrolase-like protein 1.